The chain runs to 318 residues: Acetaldehyde dehydrogenase 2 (318 aa).

Residue 9–12 (SGNI) coordinates NAD(+). Catalysis depends on cysteine 129, which acts as the Acyl-thioester intermediate. NAD(+) is bound by residues 160–168 (SAGPGTRAN) and asparagine 288.

Belongs to the acetaldehyde dehydrogenase family.

It carries out the reaction acetaldehyde + NAD(+) + CoA = acetyl-CoA + NADH + H(+). The protein is Acetaldehyde dehydrogenase 2 of Mycolicibacterium vanbaalenii (strain DSM 7251 / JCM 13017 / BCRC 16820 / KCTC 9966 / NRRL B-24157 / PYR-1) (Mycobacterium vanbaalenii).